The primary structure comprises 498 residues: Envelope glycoprotein G (498 aa).

Residues 1-20 (MKWATWILALGLLVVRTVVA) form the signal peptide. 4 N-linked (GlcNAc...) asparagine; by host glycosylation sites follow: asparagine 56, asparagine 86, asparagine 142, and asparagine 226. Repeat copies occupy residues 271–292 (EEEAELTSSDLDNIEIEVVGSP) and 308–329 (EEDEELTSSDLDNIEIEVVGSP). Residues 271–329 (EEEAELTSSDLDNIEIEVVGSPAAPAEGPATEEGRGAEEDEELTSSDLDNIEIEVVGSP) form a 2 X 22 AA repeats of E-E-[DE]-[AE]-E-L-T-S-S-D-L-D-N-I-E-I-E-V-V-G-S-P region. The interval 290–377 (GSPAAPAEGP…HRLPPEPTFV (88 aa)) is disordered. The span at 292 to 301 (PAAPAEGPAT) shows a compositional bias: low complexity. The span at 308 to 322 (EEDEELTSSDLDNIE) shows a compositional bias: acidic residues. The segment covering 329-342 (PRPPASSPPPPPPR) has biased composition (pro residues). A compositionally biased stretch (basic and acidic residues) spans 346-364 (RGRDHDHDHGHHRADDRGP). Asparagine 443 carries an N-linked (GlcNAc...) asparagine; by host glycan. A helical transmembrane segment spans residues 463–483 (VALAGLVVVGIVIMCLHMAII).

The protein belongs to the alphaherpesvirinae glycoprotein G family.

It is found in the virion membrane. In terms of biological role, chemokine-binding protein that inhibits neutrophils' chemotaxis. The polypeptide is Envelope glycoprotein G (gG) (Sus scrofa (Pig)).